The sequence spans 413 residues: Alpha-1-antitrypsin 1-5 (413 aa).

The signal sequence occupies residues 1 to 24 (MTPSISWCLLLLAGLCCLVPSFLA). N-linked (GlcNAc...) asparagine glycans are attached at residues asparagine 64, asparagine 101, and asparagine 265. The tract at residues 368 to 387 (AATVLQGGFLSMPPILHFNR) is RCL.

It belongs to the serpin family.

Its subcellular location is the secreted. Does not inhibit elastase or chymotrypsin. No target protease has been identified to date. The sequence is that of Alpha-1-antitrypsin 1-5 (Serpina1e) from Mus musculus (Mouse).